The chain runs to 295 residues: Protoheme IX farnesyltransferase (295 aa).

Helical transmembrane passes span 7–27 (VTKP…FLLA), 34–54 (VPLF…GCVF), 78–98 (LIAP…GIAL), 106–126 (LAAL…SLYM), 131–151 (VYGT…GYCA), 161–181 (LILL…IAIF), 207–227 (ITLY…GGYA), 228–248 (GYKY…MALS), and 263–283 (LFMF…VDFQ).

The protein belongs to the UbiA prenyltransferase family. Protoheme IX farnesyltransferase subfamily.

It localises to the cell inner membrane. It carries out the reaction heme b + (2E,6E)-farnesyl diphosphate + H2O = Fe(II)-heme o + diphosphate. It participates in porphyrin-containing compound metabolism; heme O biosynthesis; heme O from protoheme: step 1/1. Functionally, converts heme B (protoheme IX) to heme O by substitution of the vinyl group on carbon 2 of heme B porphyrin ring with a hydroxyethyl farnesyl side group. The sequence is that of Protoheme IX farnesyltransferase from Aeromonas salmonicida (strain A449).